The chain runs to 223 residues: ATP-dependent dethiobiotin synthetase BioD (223 aa).

12–17 (EIGKTH) is an ATP binding site. Thr16 is a Mg(2+) binding site. The active site involves Lys37. Ser41 serves as a coordination point for substrate. ATP contacts are provided by residues Asp52 and 118-121 (EGVG). Positions 52 and 118 each coordinate Mg(2+).

Belongs to the dethiobiotin synthetase family. As to quaternary structure, homodimer. Requires Mg(2+) as cofactor.

Its subcellular location is the cytoplasm. It catalyses the reaction (7R,8S)-7,8-diammoniononanoate + CO2 + ATP = (4R,5S)-dethiobiotin + ADP + phosphate + 3 H(+). Its pathway is cofactor biosynthesis; biotin biosynthesis; biotin from 7,8-diaminononanoate: step 1/2. In terms of biological role, catalyzes a mechanistically unusual reaction, the ATP-dependent insertion of CO2 between the N7 and N8 nitrogen atoms of 7,8-diaminopelargonic acid (DAPA, also called 7,8-diammoniononanoate) to form a ureido ring. This is ATP-dependent dethiobiotin synthetase BioD from Acidiphilium cryptum (strain JF-5).